The primary structure comprises 112 residues: DNA-binding protein Memar_1972 (112 aa).

The interval M14–Q35 is disordered.

The protein belongs to the PDCD5 family.

This Methanoculleus marisnigri (strain ATCC 35101 / DSM 1498 / JR1) protein is DNA-binding protein Memar_1972.